A 283-amino-acid polypeptide reads, in one-letter code: Non-selective voltage-gated ion channel VDAC3 (283 aa).

An N-acetylcysteine modification is found at Cys2. Phosphothreonine is present on Thr4. Residues Lys12, Lys15, and Lys20 each carry the N6-acetyllysine modification. 2 beta stranded membrane passes run 26-35 (MVKIDLRTKS) and 39-47 (VEFSTSGHA). A Glycyl lysine isopeptide (Lys-Gly) (interchain with G-Cter in ubiquitin) cross-link involves residue Lys53. Transmembrane regions (beta stranded) follow at residues 54-64 (ASGNLETKYKI), 69-76 (LTFTQKWN), and 80-89 (TLGTEISLEN). Lys90 bears the N6-acetyllysine mark. A beta stranded membrane pass occupies residues 95-104 (LKLTLDTIFV). Residues Lys109 and Lys110 each participate in a glycyl lysine isopeptide (Lys-Gly) (interchain with G-Cter in ubiquitin) cross-link. 10 beta stranded membrane passes run 111 to 120 (SGKLKASYKR), 123 to 130 (FSIGSNVD), 137 to 145 (TIYGWAVLA), 150 to 158 (LAGYQMSFD), 163 to 175 (KLSQNNFALGYKA), 178 to 185 (FQLHTHVN), 189 to 198 (EFGGSIYQKV), 202 to 211 (IETSINLAWT), 218 to 227 (RFGIAAKYKL), and 231 to 238 (TSLSAKVN). At Ser241 the chain carries Phosphoserine. NAD(+)-binding positions include 242–244 (LIG) and 260–264 (SALID). 2 beta stranded membrane-spanning segments follow: residues 242 to 251 (LIGLGYTQTL) and 254 to 263 (GVKLTLSALI). Position 266 is an N6-acetyllysine; alternate (Lys266). A Glycyl lysine isopeptide (Lys-Gly) (interchain with G-Cter in ubiquitin); alternate cross-link involves residue Lys266. Residues 273–282 (HKVGLGFELE) traverse the membrane as a beta stranded segment.

It belongs to the eukaryotic mitochondrial porin family. Interacts with ARMC12 in a TBC1D21-dependent manner. Interacts with MISFA. Post-translationally, ubiquitinated by PRKN during mitophagy, leading to its degradation and enhancement of mitophagy. Deubiquitinated by USP30.

It localises to the mitochondrion outer membrane. It is found in the membrane. The catalysed reaction is chloride(in) = chloride(out). The enzyme catalyses K(+)(in) = K(+)(out). In terms of biological role, non-selective voltage-gated ion channel that mediates the transport of anions and cations through the mitochondrion outer membrane and plasma membrane. Forms a high-conducting channel with a stable open state and a voltage-induced closure with a mild preference for anions over cations. Involved in male fertility and sperm mitochondrial sheath formation. The chain is Non-selective voltage-gated ion channel VDAC3 from Sus scrofa (Pig).